A 430-amino-acid chain; its full sequence is Adenylosuccinate synthetase (430 aa).

GTP contacts are provided by residues 12-18 (GDEGKGK) and 40-42 (GHT). Residue aspartate 13 is the Proton acceptor of the active site. Positions 13 and 40 each coordinate Mg(2+). Residues 13-16 (DEGK), 38-41 (NAGH), threonine 128, arginine 142, glutamine 223, threonine 238, and arginine 302 contribute to the IMP site. Histidine 41 acts as the Proton donor in catalysis. 298–304 (TTTGRPR) is a substrate binding site. Residues arginine 304, 330 to 332 (SID), and 413 to 415 (SVG) each bind GTP.

Belongs to the adenylosuccinate synthetase family. Homodimer. Requires Mg(2+) as cofactor.

Its subcellular location is the cytoplasm. The enzyme catalyses IMP + L-aspartate + GTP = N(6)-(1,2-dicarboxyethyl)-AMP + GDP + phosphate + 2 H(+). It functions in the pathway purine metabolism; AMP biosynthesis via de novo pathway; AMP from IMP: step 1/2. In terms of biological role, plays an important role in the de novo pathway of purine nucleotide biosynthesis. Catalyzes the first committed step in the biosynthesis of AMP from IMP. This is Adenylosuccinate synthetase from Lactococcus lactis subsp. cremoris (strain MG1363).